Reading from the N-terminus, the 465-residue chain is tRNA modification GTPase MnmE (465 aa).

3 residues coordinate (6S)-5-formyl-5,6,7,8-tetrahydrofolate: Arg-30, Glu-92, and Arg-132. A TrmE-type G domain is found at 227–388; sequence GLQVALVGRP…LIEAVLKTCG (162 aa). Residue Asn-237 coordinates K(+). Residues 237-242, 256-262, 281-284, and 342-345 each bind GTP; these read NVGKSS, TDLPGTT, DTAG, and NKAD. A Mg(2+)-binding site is contributed by Ser-241. K(+) contacts are provided by Thr-256, Leu-258, and Thr-261. Residue Thr-262 participates in Mg(2+) binding. Residue Lys-465 participates in (6S)-5-formyl-5,6,7,8-tetrahydrofolate binding.

It belongs to the TRAFAC class TrmE-Era-EngA-EngB-Septin-like GTPase superfamily. TrmE GTPase family. Homodimer. Heterotetramer of two MnmE and two MnmG subunits. Requires K(+) as cofactor.

The protein resides in the cytoplasm. Exhibits a very high intrinsic GTPase hydrolysis rate. Involved in the addition of a carboxymethylaminomethyl (cmnm) group at the wobble position (U34) of certain tRNAs, forming tRNA-cmnm(5)s(2)U34. This chain is tRNA modification GTPase MnmE, found in Prochlorococcus marinus (strain MIT 9303).